Reading from the N-terminus, the 83-residue chain is Neurotoxin-1'' (83 aa).

Residues 1 to 19 (MNYLVMISLALLLMIGVES) form the signal peptide. Residues 21 to 82 (RDGYIVYPNN…PIKDTSRKCT (62 aa)) enclose the LCN-type CS-alpha/beta domain. Cystine bridges form between cysteine 31/cysteine 81, cysteine 35/cysteine 53, cysteine 39/cysteine 63, and cysteine 43/cysteine 65. A propeptide (removed by a carboxypeptidase (in neurotoxin-1/1')) is located at residue arginine 83.

Belongs to the long (4 C-C) scorpion toxin superfamily. Sodium channel inhibitor family. Alpha subfamily. As to expression, expressed by the venom gland.

It is found in the secreted. In terms of biological role, alpha toxins bind voltage-independently at site-3 of sodium channels (Nav) and inhibit the inactivation of the activated channels, thereby blocking neuronal transmission. Is active against mammals and binds with high affinity rat brain synaptosomes. The sequence is that of Neurotoxin-1'' from Androctonus australis (Sahara scorpion).